The chain runs to 104 residues: Large ribosomal subunit protein uL24 (104 aa).

It belongs to the universal ribosomal protein uL24 family. As to quaternary structure, part of the 50S ribosomal subunit.

One of two assembly initiator proteins, it binds directly to the 5'-end of the 23S rRNA, where it nucleates assembly of the 50S subunit. Its function is as follows. One of the proteins that surrounds the polypeptide exit tunnel on the outside of the subunit. The protein is Large ribosomal subunit protein uL24 of Herminiimonas arsenicoxydans.